Here is a 224-residue protein sequence, read N- to C-terminus: Ribulose-phosphate 3-epimerase (224 aa).

A substrate-binding site is contributed by Ser-8. Positions 31, 33, and 64 each coordinate a divalent metal cation. The Proton acceptor role is filled by Asp-33. Residues His-64, 140–143, 173–175, and 195–196 contribute to the substrate site; these read GFGG, DGG, and GS. Asp-173 provides a ligand contact to a divalent metal cation. Asp-173 serves as the catalytic Proton donor.

Belongs to the ribulose-phosphate 3-epimerase family. A divalent metal cation is required as a cofactor.

The enzyme catalyses D-ribulose 5-phosphate = D-xylulose 5-phosphate. The protein operates within carbohydrate degradation. In terms of biological role, catalyzes the reversible epimerization of D-ribulose 5-phosphate to D-xylulose 5-phosphate. This Mycobacterium leprae (strain TN) protein is Ribulose-phosphate 3-epimerase.